Consider the following 268-residue polypeptide: Small ribosomal subunit protein uS2 (268 aa).

Positions 233 to 268 (SVREEEFAEAAAEGEEKPARRAPAKKAAKKGDDAQA) are disordered.

Belongs to the universal ribosomal protein uS2 family.

In Stenotrophomonas maltophilia (strain K279a), this protein is Small ribosomal subunit protein uS2.